The sequence spans 256 residues: Small ribosomal subunit protein uS2 (256 aa).

Residues 104 to 149 (NFKTISQRVHRLEELEALFASPEIEERPKKEQVRLKHELERLQKYL) are a coiled coil.

Belongs to the universal ribosomal protein uS2 family. Part of the 30S ribosomal subunit. Contacts protein S8.

In terms of biological role, spans the head-body hinge region of the 30S subunit. Is loosely associated with the 30S subunit. This Thermus thermophilus (strain ATCC BAA-163 / DSM 7039 / HB27) protein is Small ribosomal subunit protein uS2 (rpsB).